Here is a 1147-residue protein sequence, read N- to C-terminus: Disease resistance protein RPP4 (1147 aa).

A TIR domain is found at 11–175 (RRYDVFPSFS…KIANDVSNKL (165 aa)). Glutamate 86 is an active-site residue. In terms of domain architecture, NB-ARC spans 189-446 (EDHIKAIKSI…CFFNGFKVSN (258 aa)). LRR repeat units lie at residues 548 to 573 (MRNLQYLEIGHWSEIGLWSEIGLWSK), 584 to 606 (PLKLKLLKWNYCPLKSLPSTFKA), 608 to 629 (YLVNLIMKYSKLEKLWEGTLPL), 630 to 653 (GSLKKMDLGCSNNLKEIPDLSLAI), 655 to 676 (LEELNLSKCESLVTLPSSIQNA), 698 to 721 (MCNLEYLSVDWSSMEGTQGLIYLP), 722 to 743 (RKLKRLWWDYCPVKRLPSNFKA), 744 to 766 (EYLVELRMENSDLEKLWDGTQPL), 767 to 790 (GSLKEMYLHGSKYLKEIPDLSLAI), 792 to 813 (LERLYLFGCESLVTLPSSIQNA), 814 to 836 (TKLINLDMRDCKKLESFPTDLNL), 837 to 860 (ESLEYLNLTGCPNLRNFPAIKMGC), 926 to 950 (LGSLKRMDLSESENLTEIPDLSKAT), 952 to 973 (LKRLYLNGCKSLVTLPSTIGNL), 974 to 996 (HRLVRLEMKECTGLELLPTDVNL), 997 to 1017 (SSLIILDLSGCSSLRTFPLIS), 1018 to 1042 (TRIECLYLENTAIEEVPCCIEDLTR), and 1044 to 1064 (SVLLMYCCQRLKNISPNIFRL).

In terms of assembly, interacts with RSH1.

It carries out the reaction NAD(+) + H2O = ADP-D-ribose + nicotinamide + H(+). Its function is as follows. TIR-NB-LRR receptor-like protein that confers resistance to the pathogen Hyaloperonospora arabidopsis isolates Emoy2 and Emwa1 (downy mildew disease). Plays a role in the regulation of temperature response during plant growth and survival. The sequence is that of Disease resistance protein RPP4 from Arabidopsis thaliana (Mouse-ear cress).